Reading from the N-terminus, the 802-residue chain is Phenylalanine--tRNA ligase beta subunit (802 aa).

In terms of domain architecture, tRNA-binding spans 38-149 (KSSLKPFVIA…ADAPVGTSFA (112 aa)). The 76-residue stretch at 399 to 474 (HKPKIVSFPI…RIHGVDNIAP (76 aa)) folds into the B5 domain. Mg(2+)-binding residues include D452, D458, E461, and E462. Residues 708–801 (SAFQAVKRDF…VGKQTGGVLR (94 aa)) enclose the FDX-ACB domain.

Belongs to the phenylalanyl-tRNA synthetase beta subunit family. Type 1 subfamily. As to quaternary structure, tetramer of two alpha and two beta subunits. Mg(2+) is required as a cofactor.

It is found in the cytoplasm. It catalyses the reaction tRNA(Phe) + L-phenylalanine + ATP = L-phenylalanyl-tRNA(Phe) + AMP + diphosphate + H(+). This Mesorhizobium japonicum (strain LMG 29417 / CECT 9101 / MAFF 303099) (Mesorhizobium loti (strain MAFF 303099)) protein is Phenylalanine--tRNA ligase beta subunit.